The chain runs to 240 residues: Aspartate/glutamate leucyltransferase (240 aa).

Belongs to the R-transferase family. Bpt subfamily.

The protein resides in the cytoplasm. It carries out the reaction N-terminal L-glutamyl-[protein] + L-leucyl-tRNA(Leu) = N-terminal L-leucyl-L-glutamyl-[protein] + tRNA(Leu) + H(+). The enzyme catalyses N-terminal L-aspartyl-[protein] + L-leucyl-tRNA(Leu) = N-terminal L-leucyl-L-aspartyl-[protein] + tRNA(Leu) + H(+). In terms of biological role, functions in the N-end rule pathway of protein degradation where it conjugates Leu from its aminoacyl-tRNA to the N-termini of proteins containing an N-terminal aspartate or glutamate. In Thiobacillus denitrificans (strain ATCC 25259 / T1), this protein is Aspartate/glutamate leucyltransferase.